Here is a 206-residue protein sequence, read N- to C-terminus: MAKFDVYDLSKKKVGELDLADAVFAGEVNEHLFYEVVKAKLASDRSGTHAVKNRSLVSGGGKKPWKQKHTGRARQGSTRASQWVGGGKAMGPKPRDYSYDVPKKVRKAALRSALALRSKDQKLVIVQEWKPGAPKTAAAAKVLSALGAKKALVVDDAANLALAKSVRNLHGSDFLAVEGLNVYDILRHDALVLTADTAKKLEASLS.

The disordered stretch occupies residues 48 to 97; that stretch reads THAVKNRSLVSGGGKKPWKQKHTGRARQGSTRASQWVGGGKAMGPKPRDY. Residues 63-72 are compositionally biased toward basic residues; the sequence is KPWKQKHTGR.

Belongs to the universal ribosomal protein uL4 family. Part of the 50S ribosomal subunit.

One of the primary rRNA binding proteins, this protein initially binds near the 5'-end of the 23S rRNA. It is important during the early stages of 50S assembly. It makes multiple contacts with different domains of the 23S rRNA in the assembled 50S subunit and ribosome. Functionally, forms part of the polypeptide exit tunnel. This chain is Large ribosomal subunit protein uL4, found in Anaeromyxobacter dehalogenans (strain 2CP-1 / ATCC BAA-258).